The chain runs to 248 residues: Triosephosphate isomerase A (248 aa).

The substrate site is built by N11 and K13. H95 serves as the catalytic Electrophile. The active-site Proton acceptor is E165.

It belongs to the triosephosphate isomerase family. As to quaternary structure, homodimer.

The protein localises to the cytoplasm. The catalysed reaction is dihydroxyacetone phosphate = methylglyoxal + phosphate. It catalyses the reaction D-glyceraldehyde 3-phosphate = dihydroxyacetone phosphate. It functions in the pathway carbohydrate degradation; glycolysis; D-glyceraldehyde 3-phosphate from glycerone phosphate: step 1/1. The protein operates within carbohydrate biosynthesis; gluconeogenesis. Triosephosphate isomerase is an extremely efficient metabolic enzyme that catalyzes the interconversion between dihydroxyacetone phosphate (DHAP) and D-glyceraldehyde-3-phosphate (G3P) in glycolysis and gluconeogenesis. Functionally, it is also responsible for the non-negligible production of methylglyoxal a reactive cytotoxic side-product that modifies and can alter proteins, DNA and lipids. This chain is Triosephosphate isomerase A (tpi1a), found in Danio rerio (Zebrafish).